Reading from the N-terminus, the 491-residue chain is Cobyric acid synthase (491 aa).

In terms of domain architecture, GATase cobBQ-type spans 258–445 (ALKVAVPVLG…MHGLFGADAF (188 aa)). The active-site Nucleophile is Cys-340. His-437 is a catalytic residue.

This sequence belongs to the CobB/CobQ family. CobQ subfamily.

Its pathway is cofactor biosynthesis; adenosylcobalamin biosynthesis. Catalyzes amidations at positions B, D, E, and G on adenosylcobyrinic A,C-diamide. NH(2) groups are provided by glutamine, and one molecule of ATP is hydrogenolyzed for each amidation. The protein is Cobyric acid synthase of Mesorhizobium japonicum (strain LMG 29417 / CECT 9101 / MAFF 303099) (Mesorhizobium loti (strain MAFF 303099)).